The chain runs to 866 residues: N-alpha-acetyltransferase 15, NatA auxiliary subunit (866 aa).

TPR repeat units lie at residues 46–79, 80–113, 148–184, and 224–257; these read GETLAMKGLTLNCLGKKEEAYELVRRGLRNDLKS, HVCWHVYGLLQRSDKKYDEAIKCYRNALKWDKDN, RASWIGYAIAYHLLEDYEMAAKILEEFRKTQQTSPDK, and LAVEETKGELLLQLCRLEDAADVYRGLQERNPEN. Position 262 is an N6-acetyllysine (Lys262). Ser302 is subject to Phosphoserine. 3 TPR repeats span residues 374 to 407, 409 to 441, and 485 to 518; these read LWVQYYLAQHYDKIGQPSIALEYINTAIESTPTL, ELFLVKAKIYKHAGNIKEAARWMDEAQALDTAD, and MWFQTECAQAYKAMNKFGEALKKCHEIERHFIEI. Residues 500–866 are interaction with HYPK; it reads KFGEALKKCH…AEAEELANEI (367 aa). Ser537 and Ser588 each carry phosphoserine. Over residues 579-594 the composition is skewed to basic and acidic residues; the sequence is EHEADTANMSDKELKK. A disordered region spans residues 579-642; that stretch reads EHEADTANMS…EEIGGPKEEL (64 aa). Over residues 595-604 the composition is skewed to basic residues; the sequence is LRNKQRRAQK. A compositionally biased stretch (basic and acidic residues) spans 606-621; the sequence is AQIEEEKKNAEKEKQQ. A Bipartite nuclear localization signal motif is present at residues 612-629; it reads KKNAEKEKQQRNQKKKKD. The stretch at 672–705 is one TPR 8 repeat; sequence IETHLFAFEIYFRKEKFLLMLQSVKRAFAIDSSH. N6-acetyllysine is present on residues Lys735 and Lys756. A phosphoserine mark is found at Ser855 and Ser856.

Component of the N-terminal acetyltransferase A complex (also called the NatA complex) composed of NAA10 and NAA15. Within the complex interacts with NAA10. Component of the N-terminal acetyltransferase A (NatA)/HYPK complex at least composed of NAA10, NAA15 and HYPK, which has N-terminal acetyltransferase activity. In complex with NAA10, interacts with HYPK. Component of the N-terminal acetyltransferase E (NatE) complex at least composed of NAA10, NAA15 and NAA50. Within the complex interacts with NAA10; the interaction is required for binding to NAA50. Interacts with NAAT50. The interaction of the NatA complex with NAA50 reduces the acetylation activity of the NatA complex. Component of the N-terminal acetyltransferase E (NatE)/HYPK complex at least composed of NAA10, NAA15, NAA50 and HYPK. In complex with NAA10 interacts with HYPK; the interaction with HYPK reduces the capacity of the NatA complex to interact with NAA50. Interacts with NAA11. Interacts with XRCC6 and XRCC5. Post-translationally, cleaved by caspases during apoptosis, resulting in a stable 35 kDa fragment. In terms of tissue distribution, expressed at high levels in testis and in ocular endothelial cells. Also found in brain (corpus callosum), heart, colon, bone marrow and at lower levels in most adult tissues, including thyroid, liver, pancreas, mammary and salivary glands, lung, ovary, urogenital system and upper gastrointestinal tract. Overexpressed in gastric cancer, in papillary thyroid carcinomas and in a Burkitt lymphoma cell line (Daudi). Specifically suppressed in abnormal proliferating blood vessels in eyes of patients with proliferative diabetic retinopathy.

The protein localises to the cytoplasm. It localises to the nucleus. Functionally, auxillary subunit of N-terminal acetyltransferase complexes which display alpha (N-terminal) acetyltransferase (NAT) activity. The NAT activity may be important for vascular, hematopoietic and neuronal growth and development. Required to control retinal neovascularization in adult ocular endothelial cells. In complex with XRCC6 and XRCC5 (Ku80), up-regulates transcription from the osteocalcin promoter. This chain is N-alpha-acetyltransferase 15, NatA auxiliary subunit (NAA15), found in Homo sapiens (Human).